Consider the following 137-residue polypeptide: Phosphoribosyl-AMP cyclohydrolase (137 aa).

Asp84 provides a ligand contact to Mg(2+). A Zn(2+)-binding site is contributed by Cys85. Asp86 and Asp88 together coordinate Mg(2+). Zn(2+)-binding residues include Cys101 and Cys108.

It belongs to the PRA-CH family. Homodimer. Requires Mg(2+) as cofactor. It depends on Zn(2+) as a cofactor.

It localises to the cytoplasm. It catalyses the reaction 1-(5-phospho-beta-D-ribosyl)-5'-AMP + H2O = 1-(5-phospho-beta-D-ribosyl)-5-[(5-phospho-beta-D-ribosylamino)methylideneamino]imidazole-4-carboxamide. It functions in the pathway amino-acid biosynthesis; L-histidine biosynthesis; L-histidine from 5-phospho-alpha-D-ribose 1-diphosphate: step 3/9. Functionally, catalyzes the hydrolysis of the adenine ring of phosphoribosyl-AMP. This is Phosphoribosyl-AMP cyclohydrolase from Prosthecochloris aestuarii (strain DSM 271 / SK 413).